A 145-amino-acid chain; its full sequence is D-aminoacyl-tRNA deacylase (145 aa).

Residues 137-138 (GP) carry the Gly-cisPro motif, important for rejection of L-amino acids motif.

This sequence belongs to the DTD family. In terms of assembly, homodimer.

It localises to the cytoplasm. It catalyses the reaction glycyl-tRNA(Ala) + H2O = tRNA(Ala) + glycine + H(+). The catalysed reaction is a D-aminoacyl-tRNA + H2O = a tRNA + a D-alpha-amino acid + H(+). In terms of biological role, an aminoacyl-tRNA editing enzyme that deacylates mischarged D-aminoacyl-tRNAs. Also deacylates mischarged glycyl-tRNA(Ala), protecting cells against glycine mischarging by AlaRS. Acts via tRNA-based rather than protein-based catalysis; rejects L-amino acids rather than detecting D-amino acids in the active site. By recycling D-aminoacyl-tRNA to D-amino acids and free tRNA molecules, this enzyme counteracts the toxicity associated with the formation of D-aminoacyl-tRNA entities in vivo and helps enforce protein L-homochirality. The protein is D-aminoacyl-tRNA deacylase of Azotobacter vinelandii (strain DJ / ATCC BAA-1303).